A 353-amino-acid chain; its full sequence is Aliphatic aldoxime dehydratase (353 aa).

An an aliphatic aldoxime-binding site is contributed by Ser219. His299 provides a ligand contact to heme b. Residue His320 participates in an aliphatic aldoxime binding. His320 is an active-site residue.

Belongs to the heme-containing dehydratase family. Homodimer. It depends on heme b as a cofactor.

The enzyme catalyses an aliphatic aldoxime = a nitrile + H2O. With respect to regulation, active when the heme iron is in the ferrous state. Activated by FMN, Fe(2+), Sn(2+), Na(2)SO(3), Na(2)S and vitamin K3. In terms of biological role, catalyzes the dehydration of aldoximes to their corresponding nitrile. Is active toward various arylalkyl- and alkyl-aldoximes, and to a lesser extent toward aryl-aldoximes. This is Aliphatic aldoxime dehydratase from Rhodococcus globerulus.